Here is a 128-residue protein sequence, read N- to C-terminus: Small ribosomal subunit protein uS11 (128 aa).

This sequence belongs to the universal ribosomal protein uS11 family. Part of the 30S ribosomal subunit. Interacts with proteins S7 and S18. Binds to IF-3.

Its function is as follows. Located on the platform of the 30S subunit, it bridges several disparate RNA helices of the 16S rRNA. Forms part of the Shine-Dalgarno cleft in the 70S ribosome. In Wolbachia sp. subsp. Drosophila simulans (strain wRi), this protein is Small ribosomal subunit protein uS11.